A 387-amino-acid chain; its full sequence is S-adenosylmethionine synthase (387 aa).

H15 is an ATP binding site. D17 serves as a coordination point for Mg(2+). E43 lines the K(+) pocket. L-methionine contacts are provided by E56 and Q99. Positions 99–109 (QSPDIAQGVNA) are flexible loop. Residues 166–168 (DAK), 232–233 (RF), D241, 247–248 (RK), A264, and K268 contribute to the ATP site. D241 contacts L-methionine. An L-methionine-binding site is contributed by K272.

Belongs to the AdoMet synthase family. As to quaternary structure, homotetramer; dimer of dimers. Requires Mg(2+) as cofactor. It depends on K(+) as a cofactor.

The protein resides in the cytoplasm. It carries out the reaction L-methionine + ATP + H2O = S-adenosyl-L-methionine + phosphate + diphosphate. Its pathway is amino-acid biosynthesis; S-adenosyl-L-methionine biosynthesis; S-adenosyl-L-methionine from L-methionine: step 1/1. Functionally, catalyzes the formation of S-adenosylmethionine (AdoMet) from methionine and ATP. The overall synthetic reaction is composed of two sequential steps, AdoMet formation and the subsequent tripolyphosphate hydrolysis which occurs prior to release of AdoMet from the enzyme. This Dechloromonas aromatica (strain RCB) protein is S-adenosylmethionine synthase.